The sequence spans 301 residues: GTPase Era (301 aa).

One can recognise an Era-type G domain in the interval 6-173 (KSGFVAIVGR…LEQTNANLEI (168 aa)). Positions 14-21 (GRPNVGKS) are G1. Residue 14-21 (GRPNVGKS) participates in GTP binding. The segment at 40 to 44 (QTTRN) is G2. The segment at 61–64 (DTPG) is G3. Residues 61-65 (DTPGI) and 123-126 (NKID) each bind GTP. The G4 stretch occupies residues 123–126 (NKID). Residues 152 to 154 (ISA) form a G5 region. The region spanning 204–282 (TREEVPHSVA…FLEIWVKVQK (79 aa)) is the KH type-2 domain.

This sequence belongs to the TRAFAC class TrmE-Era-EngA-EngB-Septin-like GTPase superfamily. Era GTPase family. As to quaternary structure, monomer.

Its subcellular location is the cytoplasm. The protein localises to the cell membrane. Its function is as follows. An essential GTPase that binds both GDP and GTP, with rapid nucleotide exchange. Plays a role in 16S rRNA processing and 30S ribosomal subunit biogenesis and possibly also in cell cycle regulation and energy metabolism. The chain is GTPase Era from Listeria innocua serovar 6a (strain ATCC BAA-680 / CLIP 11262).